Consider the following 896-residue polypeptide: Pentatricopeptide repeat-containing protein At5g03800 (896 aa).

PPR repeat units follow at residues 113–143 (KTRLGNALISTYLKLGFPREAILVFVSLSSP), 144–178 (TVVSYTALISGFSRLNLEIEALKVFFRMRKAGLVQ), 180–214 (NEYTFVAILTACVRVSRFSLGIQIHGLIVKSGFLN), 215–247 (SVFVSNSLMSLYDKDSGSSCDDVLKLFDEIPQR), 248–278 (DVASWNTVVSSLVKEGKSHKAFDLFYEMNRV), 284–318 (DSFTLSTLLSSCTDSSVLLRGRELHGRAIRIGLMQ), 319–349 (ELSVNNALIGFYSKFWDMKKVESLYEMMMAQ), 350–380 (DAVTFTEMITAYMSFGMVDSAVEIFANVTEK), 381–415 (NTITYNALMAGFCRNGHGLKALKLFTDMLQRGVEL), 416–450 (TDFSLTSAVDACGLVSEKKVSEQIHGFCIKFGTAF), 451–481 (NPCIQTALLDMCTRCERMADAEEMFDQWPSN), 484–519 (SSKATTSIIGGYARNGLPDKAVSLFHRTLCEQKLFL), 520–554 (DEVSLTLILAVCGTLGFREMGYQIHCYALKAGYFS), 555–585 (DISLGNSLISMYAKCCDSDDAIKIFNTMREH), 586–620 (DVISWNSLISCYILQRNGDEALALWSRMNEKEIKP), 621–653 (DIITLTLVISAFRYTESNKLSSCRDLFLSMKTI), and 659–689 (TTEHYTAFVRVLGHWGLLEEAEDTINSMPVQ). The type E motif stretch occupies residues 694–769 (VLRALLDSCR…HPAKSWIIHE (76 aa)). Residues 770 to 800 (NKIHSFHARDTSHPQEKDIYRGLEILIMECL) form a type E(+) motif region. A type DYW motif region spans residues 801 to 896 (KVGYEPNTEY…NGKCSCRDLW (96 aa)).

This sequence belongs to the PPR family. PCMP-H subfamily.

Functionally, may play a role in embryogenesis. This is Pentatricopeptide repeat-containing protein At5g03800 (EMB175) from Arabidopsis thaliana (Mouse-ear cress).